Here is a 327-residue protein sequence, read N- to C-terminus: Neurogenic differentiation factor 6-A (327 aa).

Residues 17–85 (GANFPRDCVG…KKMTKARVDR (69 aa)) are disordered. A compositionally biased stretch (basic and acidic residues) spans 24 to 46 (CVGDLKGNKQEPFEKEETLSHVM). Residues 47–63 (DDDDSEKDEDEREDGQD) show a composition bias toward acidic residues. A compositionally biased stretch (basic residues) spans 68–80 (PRRRGPRKKKMTK). Residues 74-80 (RKKKMTK) carry the Nuclear localization signal motif. A bHLH domain is found at 88 to 140 (VRRMEANARERNRMHGLNNALDSLRKVVPCYSKTQKLSKIETLRLAKNYIWAL).

In terms of assembly, efficient DNA binding requires dimerization with another bHLH protein. As to expression, embryonic olfactory bulbs. In adult, expressed in brain, eye, intestine, muscle, ovary and skin.

Its subcellular location is the nucleus. Its function is as follows. Differentiation factor required for neurogenesis. Acts as an upstream activator of isl1. The protein is Neurogenic differentiation factor 6-A of Danio rerio (Zebrafish).